Here is a 364-residue protein sequence, read N- to C-terminus: GDP-perosamine synthase (364 aa).

Lys-183 carries the post-translational modification N6-(pyridoxal phosphate)lysine.

The protein belongs to the DegT/DnrJ/EryC1 family. As to quaternary structure, homodecamer. Requires pyridoxal 5'-phosphate as cofactor.

It catalyses the reaction GDP-alpha-D-perosamine + 2-oxoglutarate = GDP-4-dehydro-alpha-D-rhamnose + L-glutamate. It functions in the pathway bacterial outer membrane biogenesis; LPS O-antigen biosynthesis. Divalent ions have no significant effect on activity. In terms of biological role, catalyzes the synthesis of GDP-perosamine from GDP-4-keto-6-deoxy-D-mannose and L-glutamate. Can use only L-glutamate as amino donor. This chain is GDP-perosamine synthase, found in Escherichia coli O157:H7.